The following is a 152-amino-acid chain: Deoxyuridine 5'-triphosphate nucleotidohydrolase (152 aa).

Residues 71–73 (RSG), Asn84, 88–90 (LID), and Met98 contribute to the substrate site.

This sequence belongs to the dUTPase family. Homotrimer. It depends on Mg(2+) as a cofactor.

It carries out the reaction dUTP + H2O = dUMP + diphosphate + H(+). It functions in the pathway pyrimidine metabolism; dUMP biosynthesis; dUMP from dCTP (dUTP route): step 2/2. In terms of biological role, this enzyme is involved in nucleotide metabolism: it produces dUMP, the immediate precursor of thymidine nucleotides and it decreases the intracellular concentration of dUTP so that uracil cannot be incorporated into DNA. The protein is Deoxyuridine 5'-triphosphate nucleotidohydrolase of Escherichia coli O157:H7.